Reading from the N-terminus, the 205-residue chain is IQ domain-containing protein F1 (205 aa).

Composition is skewed to basic and acidic residues over residues Met-1–Pro-24 and Ala-51–Lys-68. The tract at residues Met-1–Lys-68 is disordered. 2 IQ domains span residues Lys-68–Ile-97 and Lys-124–Ile-153.

As to quaternary structure, interacts with calmodulin.

It is found in the cytoplasmic vesicle. The protein resides in the secretory vesicle. It localises to the acrosome. Its function is as follows. Involved in sperm capacitation and acrosome reaction. This chain is IQ domain-containing protein F1, found in Homo sapiens (Human).